Consider the following 418-residue polypeptide: Gamma-glutamyl phosphate reductase (418 aa).

Over residues 1-18 (MAIQDEMRQVAEGAREAS) the composition is skewed to basic and acidic residues. A disordered region spans residues 1–22 (MAIQDEMRQVAEGAREASRTLS).

It belongs to the gamma-glutamyl phosphate reductase family.

It localises to the cytoplasm. It carries out the reaction L-glutamate 5-semialdehyde + phosphate + NADP(+) = L-glutamyl 5-phosphate + NADPH + H(+). Its pathway is amino-acid biosynthesis; L-proline biosynthesis; L-glutamate 5-semialdehyde from L-glutamate: step 2/2. In terms of biological role, catalyzes the NADPH-dependent reduction of L-glutamate 5-phosphate into L-glutamate 5-semialdehyde and phosphate. The product spontaneously undergoes cyclization to form 1-pyrroline-5-carboxylate. The protein is Gamma-glutamyl phosphate reductase of Syntrophus aciditrophicus (strain SB).